We begin with the raw amino-acid sequence, 378 residues long: Queuine tRNA-ribosyltransferase (378 aa).

The active-site Proton acceptor is Asp-91. Substrate-binding positions include 91–95 (DSGGF), Asp-145, Gln-189, and Gly-216. Residues 247-253 (GVGKPED) are RNA binding. Asp-266 acts as the Nucleophile in catalysis. The RNA binding; important for wobble base 34 recognition stretch occupies residues 271–275 (TRNAR). The Zn(2+) site is built by Cys-304, Cys-306, Cys-309, and His-335.

This sequence belongs to the queuine tRNA-ribosyltransferase family. In terms of assembly, homodimer. Within each dimer, one monomer is responsible for RNA recognition and catalysis, while the other monomer binds to the replacement base PreQ1. It depends on Zn(2+) as a cofactor.

The catalysed reaction is 7-aminomethyl-7-carbaguanine + guanosine(34) in tRNA = 7-aminomethyl-7-carbaguanosine(34) in tRNA + guanine. It functions in the pathway tRNA modification; tRNA-queuosine biosynthesis. Catalyzes the base-exchange of a guanine (G) residue with the queuine precursor 7-aminomethyl-7-deazaguanine (PreQ1) at position 34 (anticodon wobble position) in tRNAs with GU(N) anticodons (tRNA-Asp, -Asn, -His and -Tyr). Catalysis occurs through a double-displacement mechanism. The nucleophile active site attacks the C1' of nucleotide 34 to detach the guanine base from the RNA, forming a covalent enzyme-RNA intermediate. The proton acceptor active site deprotonates the incoming PreQ1, allowing a nucleophilic attack on the C1' of the ribose to form the product. After dissociation, two additional enzymatic reactions on the tRNA convert PreQ1 to queuine (Q), resulting in the hypermodified nucleoside queuosine (7-(((4,5-cis-dihydroxy-2-cyclopenten-1-yl)amino)methyl)-7-deazaguanosine). The chain is Queuine tRNA-ribosyltransferase from Vibrio vulnificus (strain CMCP6).